Here is a 24-residue protein sequence, read N- to C-terminus: Protein YahV (24 aa).

A helical membrane pass occupies residues 4–24 (ILLNVLNIVFIGIAIILVIIC).

It is found in the cell inner membrane. The polypeptide is Protein YahV (Escherichia coli (strain K12)).